The sequence spans 118 residues: Basic phospholipase A2 nigexine (118 aa).

Disulfide bonds link cysteine 11–cysteine 70, cysteine 26–cysteine 117, cysteine 28–cysteine 44, cysteine 43–cysteine 98, cysteine 50–cysteine 91, cysteine 59–cysteine 84, and cysteine 77–cysteine 89. Ca(2+) is bound by residues tyrosine 27, glycine 29, and glycine 31. Residue histidine 47 is part of the active site. Position 48 (aspartate 48) interacts with Ca(2+). The Coagulation factor Xa binding motif signature appears at 52-69 (EKAGKMGCWPYFTLYKYK). The active site involves aspartate 92.

Belongs to the phospholipase A2 family. Group I subfamily. D49 sub-subfamily. Requires Ca(2+) as cofactor. In terms of tissue distribution, expressed by the venom gland.

Its subcellular location is the secreted. The enzyme catalyses a 1,2-diacyl-sn-glycero-3-phosphocholine + H2O = a 1-acyl-sn-glycero-3-phosphocholine + a fatty acid + H(+). In terms of biological role, snake venom phospholipase A2 (PLA2) that shows anticoagulant activity, has cytotoxic activity and affects neuromuscular transmission in vitro. PLA2 catalyzes the calcium-dependent hydrolysis of the 2-acyl groups in 3-sn-phosphoglycerides. This chain is Basic phospholipase A2 nigexine, found in Naja pallida (Red spitting cobra).